The primary structure comprises 379 residues: Glucose-1-phosphate adenylyltransferase (379 aa).

Residues Gly164, 179-180, and Ser190 contribute to the alpha-D-glucose 1-phosphate site; that span reads EK.

It belongs to the bacterial/plant glucose-1-phosphate adenylyltransferase family. Homotetramer.

It catalyses the reaction alpha-D-glucose 1-phosphate + ATP + H(+) = ADP-alpha-D-glucose + diphosphate. The protein operates within glycan biosynthesis; glycogen biosynthesis. Its function is as follows. Involved in the biosynthesis of ADP-glucose, a building block required for the elongation reactions to produce glycogen. Catalyzes the reaction between ATP and alpha-D-glucose 1-phosphate (G1P) to produce pyrophosphate and ADP-Glc. This is Glucose-1-phosphate adenylyltransferase from Streptococcus uberis (strain ATCC BAA-854 / 0140J).